The primary structure comprises 147 residues: Deoxyuridine 5'-triphosphate nucleotidohydrolase (147 aa).

The dUMP site is built by Ser69, Gly82, Asp85, Tyr88, Lys93, Arg137, Phe142, and Gly143.

Belongs to the dUTPase family. Homotrimer. It depends on Mg(2+) as a cofactor.

The catalysed reaction is dUTP + H2O = dUMP + diphosphate + H(+). Its pathway is pyrimidine metabolism; dUMP biosynthesis; dUMP from dCTP (dUTP route): step 2/2. Functionally, involved in nucleotide metabolism via production of dUMP, the immediate precursor of thymidine nucleotides, and decreases the intracellular concentration of dUTP so that uracil cannot be incorporated into DNA. Shows a significant activity against dITP, another potentially mutagenic nucleotide. The sequence is that of Deoxyuridine 5'-triphosphate nucleotidohydrolase from Saccharomyces cerevisiae (strain ATCC 204508 / S288c) (Baker's yeast).